The primary structure comprises 413 residues: Serine hydroxymethyltransferase (413 aa).

Residues Leu119 and 123–125 (GHL) contribute to the (6S)-5,6,7,8-tetrahydrofolate site. The residue at position 228 (Lys228) is an N6-(pyridoxal phosphate)lysine. 351–353 (SPF) is a (6S)-5,6,7,8-tetrahydrofolate binding site.

Belongs to the SHMT family. As to quaternary structure, homodimer. Pyridoxal 5'-phosphate serves as cofactor.

Its subcellular location is the cytoplasm. The enzyme catalyses (6R)-5,10-methylene-5,6,7,8-tetrahydrofolate + glycine + H2O = (6S)-5,6,7,8-tetrahydrofolate + L-serine. It participates in one-carbon metabolism; tetrahydrofolate interconversion. Its pathway is amino-acid biosynthesis; glycine biosynthesis; glycine from L-serine: step 1/1. Its function is as follows. Catalyzes the reversible interconversion of serine and glycine with tetrahydrofolate (THF) serving as the one-carbon carrier. This reaction serves as the major source of one-carbon groups required for the biosynthesis of purines, thymidylate, methionine, and other important biomolecules. Also exhibits THF-independent aldolase activity toward beta-hydroxyamino acids, producing glycine and aldehydes, via a retro-aldol mechanism. The protein is Serine hydroxymethyltransferase of Lysinibacillus sphaericus (strain C3-41).